We begin with the raw amino-acid sequence, 137 residues long: MAKEFGRPQRVSQELQKEIAIILQREIKDPRLGMMVTVSGVDVSRDLAYAKVFVTFLNDKDEAAIKGGLRALGDASGYIRTLLGKAMRLRIVPELTFFYDNSLVEGMRMSNLVTNVVRNDEERRGPAEENPEEGKAE.

This sequence belongs to the RbfA family. Monomer. Binds 30S ribosomal subunits, but not 50S ribosomal subunits or 70S ribosomes.

The protein resides in the cytoplasm. One of several proteins that assist in the late maturation steps of the functional core of the 30S ribosomal subunit. Associates with free 30S ribosomal subunits (but not with 30S subunits that are part of 70S ribosomes or polysomes). Required for efficient processing of 16S rRNA. May interact with the 5'-terminal helix region of 16S rRNA. The chain is Ribosome-binding factor A from Erwinia tasmaniensis (strain DSM 17950 / CFBP 7177 / CIP 109463 / NCPPB 4357 / Et1/99).